We begin with the raw amino-acid sequence, 56 residues long: Large ribosomal subunit protein bL32 (56 aa).

Residues 1-34 are disordered; that stretch reads MAVQQNKKSRSKRGMRRSHDSLSTAQLSVDATSG. Positions 7-16 are enriched in basic residues; sequence KKSRSKRGMR. The span at 21 to 31 shows a compositional bias: polar residues; sequence SLSTAQLSVDA.

The protein belongs to the bacterial ribosomal protein bL32 family.

The protein is Large ribosomal subunit protein bL32 of Shewanella frigidimarina (strain NCIMB 400).